Consider the following 309-residue polypeptide: Ornithine carbamoyltransferase (309 aa).

Residues 56-59, Gln-83, Arg-107, and 134-137 contribute to the carbamoyl phosphate site; these read STRT and HPCQ. L-ornithine-binding positions include Asn-165, Asp-223, and 227-228; that span reads SM. Residues 263-264 and Arg-291 contribute to the carbamoyl phosphate site; that span reads CL.

This sequence belongs to the aspartate/ornithine carbamoyltransferase superfamily. OTCase family.

The protein localises to the cytoplasm. The catalysed reaction is carbamoyl phosphate + L-ornithine = L-citrulline + phosphate + H(+). It functions in the pathway amino-acid biosynthesis; L-arginine biosynthesis; L-arginine from L-ornithine and carbamoyl phosphate: step 1/3. In terms of biological role, reversibly catalyzes the transfer of the carbamoyl group from carbamoyl phosphate (CP) to the N(epsilon) atom of ornithine (ORN) to produce L-citrulline. The polypeptide is Ornithine carbamoyltransferase (Burkholderia mallei (strain ATCC 23344)).